Consider the following 700-residue polypeptide: Polyribonucleotide nucleotidyltransferase (700 aa).

Residues aspartate 486 and aspartate 492 each contribute to the Mg(2+) site. Residues 554 to 613 (PKIISTTINPDKIREVIGPGGKMINKIIDETGVKIDINDDGRVYIFSSDIQAGKRARSMI) enclose the KH domain. Positions 623–691 (GQVFLGRVIR…KQGRVNLSRK (69 aa)) constitute an S1 motif domain.

This sequence belongs to the polyribonucleotide nucleotidyltransferase family. Requires Mg(2+) as cofactor.

It is found in the cytoplasm. It carries out the reaction RNA(n+1) + phosphate = RNA(n) + a ribonucleoside 5'-diphosphate. Involved in mRNA degradation. Catalyzes the phosphorolysis of single-stranded polyribonucleotides processively in the 3'- to 5'-direction. In Acetivibrio thermocellus (strain ATCC 27405 / DSM 1237 / JCM 9322 / NBRC 103400 / NCIMB 10682 / NRRL B-4536 / VPI 7372) (Clostridium thermocellum), this protein is Polyribonucleotide nucleotidyltransferase.